The following is a 310-amino-acid chain: UPF0761 membrane protein VF_0100 (310 aa).

Helical transmembrane passes span 34–54 (YMAY…LSVL), 97–117 (MTAV…SSID), 136–156 (FSLY…SLAA), 178–198 (LLGW…YLLV), 207–227 (HALI…VGFA), and 242–262 (ALAA…IVLI).

The protein belongs to the UPF0761 family.

It is found in the cell inner membrane. This is UPF0761 membrane protein VF_0100 from Aliivibrio fischeri (strain ATCC 700601 / ES114) (Vibrio fischeri).